Reading from the N-terminus, the 53-residue chain is Photoreceptor disk component PRCD (53 aa).

Cys-2 carries the S-palmitoyl cysteine lipid modification. The tract at residues 24–53 (PEPSRVDGTVVGSGSDTDLQSTGREKGPVK) is disordered. A compositionally biased stretch (polar residues) spans 35–45 (GSGSDTDLQST).

The protein belongs to the PRCD family. In terms of assembly, interacts with RHO/rhodopsin; the interaction promotes PRCD stability. Palmitoylated at Cys-2. Palmitoylation is essential for protein stability and trafficking to the photoreceptor outer segment, but does not appear to be essential for membrane localization. Probably palmitoylated by ZDHHC3. In terms of processing, phosphorylated. Expressed in retina, where it localizes to both rod and cone photoreceptors (at protein level).

The protein resides in the cell projection. Its subcellular location is the cilium. It is found in the photoreceptor outer segment. It localises to the membrane. The protein localises to the endoplasmic reticulum. The protein resides in the golgi apparatus. Involved in vision. This is Photoreceptor disk component PRCD from Mus musculus (Mouse).